The following is a 237-amino-acid chain: Uridylate kinase (237 aa).

Residue 9–12 coordinates ATP; sequence KLSG. The involved in allosteric activation by GTP stretch occupies residues 17–22; the sequence is GSQGYG. Gly-51 contacts UMP. The ATP site is built by Gly-52 and Arg-56. Residues Asp-71 and 132 to 139 contribute to the UMP site; that span reads CGNPFFTT. Residues Thr-159, Tyr-165, and Asp-168 each contribute to the ATP site.

It belongs to the UMP kinase family. Homohexamer.

The protein localises to the cytoplasm. The enzyme catalyses UMP + ATP = UDP + ADP. Its pathway is pyrimidine metabolism; CTP biosynthesis via de novo pathway; UDP from UMP (UMPK route): step 1/1. With respect to regulation, allosterically activated by GTP. Inhibited by UTP. In terms of biological role, catalyzes the reversible phosphorylation of UMP to UDP. This Synechococcus sp. (strain CC9605) protein is Uridylate kinase.